The primary structure comprises 882 residues: DNA mismatch repair protein MutS (882 aa).

An ATP-binding site is contributed by 635–642; sequence GPNMGGKS.

The protein belongs to the DNA mismatch repair MutS family.

Its function is as follows. This protein is involved in the repair of mismatches in DNA. It is possible that it carries out the mismatch recognition step. This protein has a weak ATPase activity. This chain is DNA mismatch repair protein MutS, found in Janthinobacterium sp. (strain Marseille) (Minibacterium massiliensis).